We begin with the raw amino-acid sequence, 500 residues long: Zinc finger protein 689 (500 aa).

Residues 1 to 24 form a disordered region; it reads MAPPSAPLLEQAPGEVGPTRRRGR. The 72-residue stretch at 29–100 folds into the KRAB domain; it reads LKFADVAVYF…AALDPQEYRR (72 aa). The interval 110-144 is disordered; it reads TRQKNEEKEVFPPKDVPRKGKRGRKPSKPRLIARQ. Positions 112 to 127 are enriched in basic and acidic residues; the sequence is QKNEEKEVFPPKDVPR. Over residues 128–137 the composition is skewed to basic residues; it reads KGKRGRKPSK. The C2H2-type 1; degenerate zinc-finger motif lies at 149–171; it reads PICPDCGCTFPDLPALESHKCAQ. 10 consecutive C2H2-type zinc fingers follow at residues 177-199, 205-227, 233-255, 261-283, 289-311, 317-339, 345-367, 373-395, 401-423, and 429-451; these read YPCP…RRAH, YVCD…QVIH, YHCP…RTTH, HQCP…QRTH, YTCL…QRIH, YPCP…RRVH, YACE…QLLH, YPCP…RSTH, HACD…RRVH, and YACD…QLLH. Lys-455 is covalently cross-linked (Glycyl lysine isopeptide (Lys-Gly) (interchain with G-Cter in SUMO2)). The C2H2-type 12 zinc-finger motif lies at 457–482; the sequence is FPCLECGRCFRQRWSLAVHKCCPNTH.

This sequence belongs to the krueppel C2H2-type zinc-finger protein family.

It localises to the nucleus. May be involved in transcriptional regulation. The protein is Zinc finger protein 689 (Znf689) of Rattus norvegicus (Rat).